The following is a 744-amino-acid chain: NAD(P)H-quinone oxidoreductase subunit 5, chloroplastic (744 aa).

A run of 16 helical transmembrane segments spans residues 9 to 29 (WIIP…LFLF), 40 to 60 (WAFQ…NLSI), 89 to 109 (IDPL…LVLI), 125 to 145 (FVYM…SNLI), 147 to 167 (IYIF…FWFT), 185 to 205 (GDFG…SFEF), 219 to 239 (NEVN…GAIA), 258 to 278 (TPIS…FLVA), 290 to 312 (IMNF…ALAQ), 327 to 347 (LGYM…FHLI), 354 to 374 (ALLF…VGYC), 396 to 416 (TSFL…CFWS), 425 to 445 (WLYS…TAFY), 549 to 569 (LFPI…GIPF), 608 to 628 (VFSV…YKPV), and 724 to 744 (YLFF…FLNF).

It belongs to the complex I subunit 5 family. In terms of assembly, NDH is composed of at least 16 different subunits, 5 of which are encoded in the nucleus.

The protein resides in the plastid. It is found in the chloroplast thylakoid membrane. It carries out the reaction a plastoquinone + NADH + (n+1) H(+)(in) = a plastoquinol + NAD(+) + n H(+)(out). The catalysed reaction is a plastoquinone + NADPH + (n+1) H(+)(in) = a plastoquinol + NADP(+) + n H(+)(out). In terms of biological role, NDH shuttles electrons from NAD(P)H:plastoquinone, via FMN and iron-sulfur (Fe-S) centers, to quinones in the photosynthetic chain and possibly in a chloroplast respiratory chain. The immediate electron acceptor for the enzyme in this species is believed to be plastoquinone. Couples the redox reaction to proton translocation, and thus conserves the redox energy in a proton gradient. The polypeptide is NAD(P)H-quinone oxidoreductase subunit 5, chloroplastic (ndhF) (Mutisia acuminata).